Reading from the N-terminus, the 212-residue chain is ATP-dependent dethiobiotin synthetase BioD (212 aa).

13-18 (GIGKTV) contributes to the ATP binding site. T17 contacts Mg(2+). Residue K33 is part of the active site. S37 serves as a coordination point for substrate. E100 is a binding site for Mg(2+). ATP-binding positions include 100-103 (EGAG) and 184-186 (PLL).

Belongs to the dethiobiotin synthetase family. Homodimer. Requires Mg(2+) as cofactor.

The protein resides in the cytoplasm. The catalysed reaction is (7R,8S)-7,8-diammoniononanoate + CO2 + ATP = (4R,5S)-dethiobiotin + ADP + phosphate + 3 H(+). The protein operates within cofactor biosynthesis; biotin biosynthesis; biotin from 7,8-diaminononanoate: step 1/2. Catalyzes a mechanistically unusual reaction, the ATP-dependent insertion of CO2 between the N7 and N8 nitrogen atoms of 7,8-diaminopelargonic acid (DAPA, also called 7,8-diammoniononanoate) to form a ureido ring. This is ATP-dependent dethiobiotin synthetase BioD from Brucella canis (strain ATCC 23365 / NCTC 10854 / RM-666).